A 52-amino-acid polypeptide reads, in one-letter code: UPF0057 membrane protein YqaE (52 aa).

Helical transmembrane passes span 1–21 (MGFW…LLGK) and 23–43 (FGWA…PGLI).

It belongs to the UPF0057 (PMP3) family.

Its subcellular location is the cell membrane. The polypeptide is UPF0057 membrane protein YqaE (yqaE) (Escherichia coli O157:H7).